A 711-amino-acid polypeptide reads, in one-letter code: Polyribonucleotide nucleotidyltransferase (711 aa).

Positions 489 and 495 each coordinate Mg(2+). One can recognise a KH domain in the interval 556–615 (PRIHTIKISPDKIKDVIGKGGSVIRALTEETGTTIEIEDDGTVKIAATDGEKAKHAIRRI). Residues 625–693 (GRIYNGKVTR…RQGRVRLSIK (69 aa)) form the S1 motif domain.

It belongs to the polyribonucleotide nucleotidyltransferase family. As to quaternary structure, component of the RNA degradosome, which is a multiprotein complex involved in RNA processing and mRNA degradation. The cofactor is Mg(2+).

It is found in the cytoplasm. The enzyme catalyses RNA(n+1) + phosphate = RNA(n) + a ribonucleoside 5'-diphosphate. Involved in mRNA degradation. Catalyzes the phosphorolysis of single-stranded polyribonucleotides processively in the 3'- to 5'-direction. This is Polyribonucleotide nucleotidyltransferase from Cronobacter sakazakii (strain ATCC BAA-894) (Enterobacter sakazakii).